Reading from the N-terminus, the 397-residue chain is Protochlorophyllide reductase, chloroplastic (397 aa).

The transit peptide at 1-57 (MALTMSAKSVSARAQVSSKAQAAPAVAVSGRTSSRVMPAPALAARSSVARTPLVVCA) directs the protein to the chloroplast.

Belongs to the short-chain dehydrogenases/reductases (SDR) family. POR subfamily.

It is found in the plastid. The protein resides in the chloroplast. It carries out the reaction chlorophyllide a + NADP(+) = protochlorophyllide a + NADPH + H(+). The protein operates within porphyrin-containing compound metabolism; chlorophyll biosynthesis. Its function is as follows. Phototransformation of protochlorophyllide (Pchlide) to chlorophyllide (Chlide). In Chlamydomonas reinhardtii (Chlamydomonas smithii), this protein is Protochlorophyllide reductase, chloroplastic (PORA).